We begin with the raw amino-acid sequence, 296 residues long: GTPase Era (296 aa).

Residues 7–173 (KAGFVSIIGR…VDLVREHLPE (167 aa)) enclose the Era-type G domain. A G1 region spans residues 15 to 22 (GRPNVGKS). 15 to 22 (GRPNVGKS) contacts GTP. The interval 41-45 (QTTRN) is G2. A G3 region spans residues 62-65 (DTPG). Residues 62-66 (DTPGI) and 122-125 (NKID) contribute to the GTP site. A G4 region spans residues 122-125 (NKID). Residues 152 to 154 (ISA) form a G5 region. Residues 204-281 (TNREVPYGTA…YLELFVQVQE (78 aa)) form the KH type-2 domain.

It belongs to the TRAFAC class TrmE-Era-EngA-EngB-Septin-like GTPase superfamily. Era GTPase family. As to quaternary structure, monomer.

The protein resides in the cytoplasm. It is found in the cell inner membrane. An essential GTPase that binds both GDP and GTP, with rapid nucleotide exchange. Plays a role in 16S rRNA processing and 30S ribosomal subunit biogenesis and possibly also in cell cycle regulation and energy metabolism. This is GTPase Era from Trichlorobacter lovleyi (strain ATCC BAA-1151 / DSM 17278 / SZ) (Geobacter lovleyi).